A 447-amino-acid polypeptide reads, in one-letter code: Cysteine--tRNA ligase (447 aa).

Residue cysteine 28 participates in Zn(2+) binding. Residues 30-40 (PTVYNYIHIGN) carry the 'HIGH' region motif. Zn(2+) is bound by residues cysteine 211, histidine 236, and glutamate 240. The 'KMSKS' region motif lies at 268–272 (KMSKS). Lysine 271 is an ATP binding site.

Belongs to the class-I aminoacyl-tRNA synthetase family. In terms of assembly, monomer. Zn(2+) serves as cofactor.

The protein localises to the cytoplasm. The enzyme catalyses tRNA(Cys) + L-cysteine + ATP = L-cysteinyl-tRNA(Cys) + AMP + diphosphate. This is Cysteine--tRNA ligase from Streptococcus thermophilus (strain CNRZ 1066).